Reading from the N-terminus, the 295-residue chain is Keratin-like protein KRT222 (295 aa).

The region spanning 1–150 (MELSQLLNEI…HLLEKEEIRY (150 aa)) is the IF rod domain. The stretch at 2–150 (ELSQLLNEIR…HLLEKEEIRY (149 aa)) forms a coiled coil.

It belongs to the intermediate filament family.

This Homo sapiens (Human) protein is Keratin-like protein KRT222 (KRT222).